The following is a 1666-amino-acid chain: Latent-transforming growth factor beta-binding protein 4 (1666 aa).

Residues methionine 1–alanine 24 form the signal peptide. Residues alanine 148–glutamine 180 form the EGF-like 1 domain. Disulfide bonds link cysteine 152/cysteine 162, cysteine 156/cysteine 168, cysteine 170/cysteine 179, cysteine 288/cysteine 310, cysteine 297/cysteine 323, and cysteine 311/cysteine 326. The region spanning glycine 286–glycine 338 is the TB 1 domain. Asparagine 351 carries N-linked (GlcNAc...) asparagine glycosylation. The 41-residue stretch at aspartate 356–isoleucine 396 folds into the EGF-like 2; calcium-binding domain. Cystine bridges form between cysteine 360-cysteine 371, cysteine 366-cysteine 380, cysteine 382-cysteine 395, cysteine 408-cysteine 430, cysteine 417-cysteine 443, cysteine 431-cysteine 446, and cysteine 432-cysteine 458. In terms of domain architecture, TB 2 spans glycine 406–cysteine 458. Asparagine 424 carries N-linked (GlcNAc...) asparagine glycosylation. Residues tyrosine 473–serine 590 form a disordered region. Pro residues predominate over residues arginine 491–glycine 502. Positions proline 521 to proline 561 are enriched in basic and acidic residues. Over residues glutamate 562–serine 573 the composition is skewed to pro residues. Residues glycine 579 to serine 590 are compositionally biased toward low complexity. The EGF-like 3 domain maps to serine 588 to isoleucine 629. Intrachain disulfides connect cysteine 592–cysteine 604, cysteine 599–cysteine 613, cysteine 615–cysteine 628, cysteine 634–cysteine 646, cysteine 641–cysteine 655, cysteine 657–cysteine 670, cysteine 676–cysteine 688, cysteine 683–cysteine 697, cysteine 699–cysteine 712, cysteine 718–cysteine 730, cysteine 725–cysteine 739, cysteine 741–cysteine 750, cysteine 757–cysteine 769, cysteine 764–cysteine 778, cysteine 780–cysteine 793, cysteine 799–cysteine 811, cysteine 806–cysteine 820, cysteine 822–cysteine 835, cysteine 881–cysteine 893, cysteine 887–cysteine 902, cysteine 904–cysteine 918, cysteine 924–cysteine 936, cysteine 930–cysteine 945, cysteine 947–cysteine 960, cysteine 966–cysteine 977, cysteine 972–cysteine 986, cysteine 988–cysteine 1001, cysteine 1095–cysteine 1107, cysteine 1101–cysteine 1116, and cysteine 1118–cysteine 1131. An EGF-like 4; calcium-binding domain is found at aspartate 630–leucine 671. Residues aspartate 672–glutamine 713 form the EGF-like 5; calcium-binding domain. The EGF-like 6; calcium-binding domain maps to aspartate 714–glutamate 751. The region spanning aspartate 753–glutamine 794 is the EGF-like 7; calcium-binding domain. The EGF-like 8; calcium-binding domain occupies aspartate 795–glutamate 836. One can recognise an EGF-like 9; calcium-binding domain in the interval aspartate 877–alanine 919. Positions aspartate 920–leucine 961 constitute an EGF-like 10; calcium-binding domain. Residues aspartate 962–leucine 1002 enclose the EGF-like 11; calcium-binding domain. The region spanning aspartate 1091–valine 1132 is the EGF-like 12; calcium-binding domain. Asparagine 1097 carries N-linked (GlcNAc...) asparagine glycosylation. Positions threonine 1171 to glycine 1221 are disordered. The segment covering proline 1185–leucine 1197 has biased composition (low complexity). Positions proline 1198–glutamine 1215 are enriched in pro residues. In terms of domain architecture, TB 3 spans arginine 1223–cysteine 1277. Disulfide bonds link cysteine 1225–cysteine 1248, cysteine 1235–cysteine 1260, cysteine 1249–cysteine 1265, cysteine 1250–cysteine 1277, cysteine 1299–cysteine 1312, cysteine 1307–cysteine 1321, cysteine 1323–cysteine 1336, cysteine 1342–cysteine 1354, cysteine 1349–cysteine 1363, and cysteine 1365–cysteine 1378. Residue asparagine 1242 is glycosylated (N-linked (GlcNAc...) asparagine). Positions aspartate 1295 to valine 1337 constitute an EGF-like 13; calcium-binding domain. An EGF-like 14; calcium-binding domain is found at aspartate 1338 to valine 1379. Asparagine 1381 is a glycosylation site (N-linked (GlcNAc...) asparagine). The TB 4 domain maps to glycine 1391 to cysteine 1444. 4 disulfides stabilise this stretch: cysteine 1393–cysteine 1417, cysteine 1403–cysteine 1429, cysteine 1418–cysteine 1432, and cysteine 1419–cysteine 1444. Pro residues predominate over residues valine 1488 to proline 1500. Residues valine 1488–alanine 1566 form a disordered region. Position 1564 is a phosphothreonine (threonine 1564). 2 consecutive EGF-like domains span residues glutamate 1575–valine 1615 and aspartate 1616–alanine 1660. 6 disulfide bridges follow: cysteine 1579–cysteine 1590, cysteine 1585–cysteine 1599, cysteine 1601–cysteine 1614, cysteine 1620–cysteine 1635, cysteine 1630–cysteine 1644, and cysteine 1646–cysteine 1659.

It belongs to the LTBP family. In terms of assembly, forms part of the large latent transforming growth factor beta precursor complex; removal is essential for activation of complex. Interacts with LTBP1 and TGFB1. Interacts with EFEMP2; this interaction promotes fibrillar deposition of EFEMP2. In terms of processing, contains hydroxylated asparagine residues.

It localises to the secreted. The protein localises to the extracellular space. It is found in the extracellular matrix. Its function is as follows. Key regulator of transforming growth factor beta (TGFB1, TGFB2 and TGFB3) that controls TGF-beta activation by maintaining it in a latent state during storage in extracellular space. Associates specifically via disulfide bonds with the Latency-associated peptide (LAP), which is the regulatory chain of TGF-beta, and regulates integrin-dependent activation of TGF-beta. This Mus musculus (Mouse) protein is Latent-transforming growth factor beta-binding protein 4 (Ltbp4).